Reading from the N-terminus, the 205-residue chain is Thymidylate kinase (205 aa).

An ATP-binding site is contributed by 11–18; the sequence is GPEGSGKT.

This sequence belongs to the thymidylate kinase family.

The catalysed reaction is dTMP + ATP = dTDP + ADP. Phosphorylation of dTMP to form dTDP in both de novo and salvage pathways of dTTP synthesis. In Clostridium novyi (strain NT), this protein is Thymidylate kinase.